Here is a 150-residue protein sequence, read N- to C-terminus: 1,4-dihydroxy-2-naphthoyl-CoA hydrolase (150 aa).

Asp19 is an active-site residue.

This sequence belongs to the 4-hydroxybenzoyl-CoA thioesterase family. DHNA-CoA hydrolase subfamily.

The enzyme catalyses 1,4-dihydroxy-2-naphthoyl-CoA + H2O = 1,4-dihydroxy-2-naphthoate + CoA + H(+). Its pathway is cofactor biosynthesis; phylloquinone biosynthesis. It participates in quinol/quinone metabolism; 1,4-dihydroxy-2-naphthoate biosynthesis; 1,4-dihydroxy-2-naphthoate from chorismate: step 7/7. Catalyzes the hydrolysis of 1,4-dihydroxy-2-naphthoyl-CoA (DHNA-CoA) to 1,4-dihydroxy-2-naphthoate (DHNA), a reaction involved in phylloquinone (vitamin K1) biosynthesis. This chain is 1,4-dihydroxy-2-naphthoyl-CoA hydrolase, found in Prochlorococcus marinus subsp. pastoris (strain CCMP1986 / NIES-2087 / MED4).